The sequence spans 436 residues: Mannan endo-1,4-beta-mannosidase F (436 aa).

An N-terminal signal peptide occupies residues 1-18 (MRSLSSVALLSAIGAASA). The 36-residue stretch at 19-54 (QAGPWGQCAGISHTGPTTCESGWSCVYLNDWYSQCQ) folds into the CBM1 domain. The segment at 60–88 (SSSTTVSSTKQPSSTVAAPSSTTSAHTLP) is disordered. Positions 79–113 (SSTTSAHTLPTGSGSFAKTDGLKFNIDGKTKYFAG) are ser-rich linker. Residues 114–436 (TNAYWLPFLT…CAVIDHISQI (323 aa)) are catalytic. Substrate-binding residues include tryptophan 146 and asparagine 260. The active-site Proton donor is the glutamate 261. Tyrosine 336 contributes to the substrate binding site. Glutamate 370 acts as the Nucleophile in catalysis. A substrate-binding site is contributed by tryptophan 400.

Belongs to the glycosyl hydrolase 5 (cellulase A) family.

It is found in the secreted. It carries out the reaction Random hydrolysis of (1-&gt;4)-beta-D-mannosidic linkages in mannans, galactomannans and glucomannans.. Endo-1,4-mannanase, a crucial enzyme for depolymerization of seed galactomannans and wood galactoglucomannans. In Aspergillus clavatus (strain ATCC 1007 / CBS 513.65 / DSM 816 / NCTC 3887 / NRRL 1 / QM 1276 / 107), this protein is Mannan endo-1,4-beta-mannosidase F (manF).